The chain runs to 467 residues: Neutrophil collagenase (467 aa).

Residues 1–20 (MFSLKTLPFLLLLHVQISKA) form the signal peptide. Residues 21–100 (FPVSSKEKNT…CGVPDSGGFM (80 aa)) constitute a propeptide, activation peptide. 2 N-linked (GlcNAc...) asparagine glycosylation sites follow: Asn54 and Asn73. Residues 89–96 (PRCGVPDS) carry the Cysteine switch motif. Residue Cys91 participates in Zn(2+) binding. A glycan (N-linked (GlcNAc...) asparagine) is linked at Asn112. Asp157 contributes to the Ca(2+) binding site. Residues His167 and Asp169 each coordinate Zn(2+). The Ca(2+) site is built by Asp174, Gly175, Asn177, and Ile179. His182 contacts Zn(2+). Residues Gly189, Gly191, and Asp193 each contribute to the Ca(2+) site. Residue His195 participates in Zn(2+) binding. Positions 197 and 200 each coordinate Ca(2+). N-linked (GlcNAc...) asparagine glycosylation occurs at Asn204. Residue His217 coordinates Zn(2+). Glu218 is a catalytic residue. Residues His221 and His227 each contribute to the Zn(2+) site. A glycan (N-linked (GlcNAc...) asparagine) is linked at Asn246. 4 Hemopexin repeats span residues 276-325 (PKPC…WPSL), 326-372 (PTGI…GFPS), 374-420 (VQAI…FPGI), and 421-464 (ESKV…WLNC). Residues Cys279 and Cys464 are joined by a disulfide bond. Residue Asp286 participates in Ca(2+) binding. Residues Asp378 and Asp425 each contribute to the Ca(2+) site.

This sequence belongs to the peptidase M10A family. It depends on Ca(2+) as a cofactor. The cofactor is Zn(2+). In terms of tissue distribution, neutrophils.

The protein localises to the cytoplasmic granule. Its subcellular location is the secreted. It is found in the extracellular space. It localises to the extracellular matrix. The enzyme catalyses Cleavage of interstitial collagens in the triple helical domain. Unlike EC 3.4.24.7, this enzyme cleaves type III collagen more slowly than type I.. Cannot be activated without removal of the activation peptide. Functionally, can degrade fibrillar type I, II, and III collagens. This chain is Neutrophil collagenase (MMP8), found in Homo sapiens (Human).